Consider the following 391-residue polypeptide: Arrestin-C (391 aa).

Residues 369–379 show a composition bias toward basic and acidic residues; sequence ARQEPGGREES. The tract at residues 369-391 is disordered; that stretch reads ARQEPGGREESQEALAAEGDEGS.

Belongs to the arrestin family. In terms of assembly, homodimer; disulfide-linked in response to retinal illumination. Interacts with CXCR4; the interaction is dependent on the C-terminal phosphorylation of CXCR4 and modulates the calcium ion mobilization activity of CXCR4. Interacts with GPR84.

It localises to the photoreceptor inner segment. It is found in the cell projection. The protein localises to the cilium. Its subcellular location is the photoreceptor outer segment. Its function is as follows. May play a role in an as yet undefined retina-specific signal transduction. Could bind to photoactivated-phosphorylated red/green opsins. The chain is Arrestin-C (ARR3) from Sus scrofa (Pig).